The chain runs to 229 residues: RNA chaperone ProQ (229 aa).

Positions Glu-105–Ser-178 are disordered. Residues Gln-117 to Arg-136 show a composition bias toward basic and acidic residues. Positions Arg-137 to Pro-146 are enriched in basic residues. The segment covering Arg-147–Pro-176 has biased composition (basic and acidic residues).

It belongs to the ProQ family.

It localises to the cytoplasm. RNA chaperone with significant RNA binding, RNA strand exchange and RNA duplexing activities. May regulate ProP activity through an RNA-based, post-transcriptional mechanism. This Escherichia fergusonii (strain ATCC 35469 / DSM 13698 / CCUG 18766 / IAM 14443 / JCM 21226 / LMG 7866 / NBRC 102419 / NCTC 12128 / CDC 0568-73) protein is RNA chaperone ProQ.